Here is a 232-residue protein sequence, read N- to C-terminus: Ribonuclease 3 (232 aa).

The 130-residue stretch at 5-134 folds into the RNase III domain; that stretch reads QTVLKNHFAI…FLGALLLDKD (130 aa). Mg(2+) is bound at residue Glu47. Residue Asp51 is part of the active site. Mg(2+) is bound by residues Asp120 and Glu123. Glu123 is an active-site residue. The 70-residue stretch at 160 to 229 folds into the DRBM domain; that stretch reads DYKTHLQELL…AKNAVEKGLD (70 aa).

Belongs to the ribonuclease III family. As to quaternary structure, homodimer. The cofactor is Mg(2+).

It is found in the cytoplasm. The catalysed reaction is Endonucleolytic cleavage to 5'-phosphomonoester.. Digests double-stranded RNA. Involved in the processing of primary rRNA transcript to yield the immediate precursors to the large and small rRNAs (23S and 16S). Processes some mRNAs, and tRNAs when they are encoded in the rRNA operon. Processes pre-crRNA and tracrRNA of type II CRISPR loci if present in the organism. This is Ribonuclease 3 from Streptococcus pneumoniae (strain P1031).